The primary structure comprises 1023 residues: Exportin-T (1023 aa).

Belongs to the exportin family.

The protein resides in the nucleus. It is found in the cytoplasm. In terms of biological role, tRNA nucleus export receptor which facilitates tRNA translocation across the nuclear pore complex. Involved in pre-tRNA splicing, probably by affecting the interaction of pre-tRNA with splicing endonuclease. In Botryotinia fuckeliana (strain B05.10) (Noble rot fungus), this protein is Exportin-T (los1).